A 300-amino-acid polypeptide reads, in one-letter code: Acetyl-coenzyme A carboxylase carboxyl transferase subunit beta 2 (300 aa).

Positions 26 to 294 constitute a CoA carboxyltransferase N-terminal domain; that stretch reads VWVKCPSCRE…SGAYSSEAVA (269 aa). The Zn(2+) site is built by C30, C33, C49, and C51. The segment at 30-51 adopts a C4-type zinc-finger fold; it reads CPSCRELIYHKQLAERMKVCRC.

Belongs to the AccD/PCCB family. Acetyl-CoA carboxylase is a heterohexamer composed of biotin carboxyl carrier protein (AccB), biotin carboxylase (AccC) and two subunits each of ACCase subunit alpha (AccA) and ACCase subunit beta (AccD). Requires Zn(2+) as cofactor.

Its subcellular location is the cytoplasm. The catalysed reaction is N(6)-carboxybiotinyl-L-lysyl-[protein] + acetyl-CoA = N(6)-biotinyl-L-lysyl-[protein] + malonyl-CoA. Its pathway is lipid metabolism; malonyl-CoA biosynthesis; malonyl-CoA from acetyl-CoA: step 1/1. Component of the acetyl coenzyme A carboxylase (ACC) complex. Biotin carboxylase (BC) catalyzes the carboxylation of biotin on its carrier protein (BCCP) and then the CO(2) group is transferred by the transcarboxylase to acetyl-CoA to form malonyl-CoA. The chain is Acetyl-coenzyme A carboxylase carboxyl transferase subunit beta 2 from Roseiflexus castenholzii (strain DSM 13941 / HLO8).